Consider the following 551-residue polypeptide: Mesoderm induction early response protein 3 (551 aa).

A compositionally biased stretch (low complexity) spans 1–16 (MAEASFGSSSPVGSLS). Disordered regions lie at residues 1 to 62 (MAEA…EKEG) and 113 to 169 (LSGD…GNSP). A compositionally biased stretch (basic and acidic residues) spans 17 to 36 (SEDHDFDPTAEMLVHDYDDE). Phosphoserine occurs at positions 52, 53, and 114. Residues 121–134 (QSSADDLTPSVTSH) are compositionally biased toward polar residues. Over residues 154-163 (KESEIEDVET) the composition is skewed to acidic residues. The residue at position 156 (serine 156) is a Phosphoserine. Threonine 163 is modified (phosphothreonine). A phosphoserine mark is found at serine 165 and serine 168. The region spanning 174-273 (REIMIGLEYQ…EAIERYCCNG (100 aa)) is the ELM2 domain. Residues 278–330 (EGMTAWTEEECRSFEHALMLHGKDFHLIQKDKVRSRTVAECVAFYYMWKKSER) enclose the SANT domain.

The protein resides in the nucleus. Transcriptional repressor. In Mus musculus (Mouse), this protein is Mesoderm induction early response protein 3 (Mier3).